The chain runs to 267 residues: Proteasome subunit alpha (267 aa).

The tract at residues 231 to 267 is disordered; it reads ETLLQERDSKESAESEEPIESEEGKKTGKKSDADSSD. Composition is skewed to basic and acidic residues over residues 234–243 and 252–267; these read LQERDSKESA and EEGKKTGKKSDADSSD.

Belongs to the peptidase T1A family. In terms of assembly, the 20S proteasome core is composed of 14 alpha and 14 beta subunits that assemble into four stacked heptameric rings, resulting in a barrel-shaped structure. The two inner rings, each composed of seven catalytic beta subunits, are sandwiched by two outer rings, each composed of seven alpha subunits. The catalytic chamber with the active sites is on the inside of the barrel. Has a gated structure, the ends of the cylinder being occluded by the N-termini of the alpha-subunits. Is capped by the proteasome-associated ATPase, ARC.

It localises to the cytoplasm. The protein operates within protein degradation; proteasomal Pup-dependent pathway. The formation of the proteasomal ATPase ARC-20S proteasome complex, likely via the docking of the C-termini of ARC into the intersubunit pockets in the alpha-rings, may trigger opening of the gate for substrate entry. Interconversion between the open-gate and close-gate conformations leads to a dynamic regulation of the 20S proteasome proteolysis activity. In terms of biological role, component of the proteasome core, a large protease complex with broad specificity involved in protein degradation. This Mycobacterium ulcerans (strain Agy99) protein is Proteasome subunit alpha.